We begin with the raw amino-acid sequence, 81 residues long: Beta-catenin-interacting protein 1 (81 aa).

Serine 59 carries the post-translational modification Phosphoserine.

This sequence belongs to the CTNNBIP1 family. In terms of assembly, binds CTNNB1.

It is found in the cytoplasm. Its subcellular location is the nucleus. Prevents the interaction between CTNNB1 and TCF family members, and acts as a negative regulator of the Wnt signaling pathway. This chain is Beta-catenin-interacting protein 1 (CTNNBIP1), found in Bos taurus (Bovine).